The sequence spans 936 residues: MTTGFLQKIFGSRNQRLVKQYQKTVAAINALEPQIEQLTDDQLRGKTGEFRQRVASGESLDKLLPEAFAVCREASKRVLKMRHFDVQLIGGMVLHYGKIGEMRTGEGKTLVATLPVYLNALSGRGVHVVTVNDYLAQRDAEWMARLYNFLGLSVGINLSQMDHAAKQEAYAADITYGTNNEFGFDYLRDNMVYETDARVQRALNFAVVDEVDSILIDEARTPLIISGQAEDHTELYVRMNALPPLLERQIGEEKADGTGVEKPGDYTLDEKGRQVFLTESGHEKAERLLSEWGLIGEGESLYAPQNITLMHHVYAALRAHTLFFKDQHYVVQNGEVVIVDEFTGRLMSGRRWSDGLHQAVEAKEHVKIQSENQTLASITFQNYFRMYAKLSGMTGTADTEAYEFNEIYGLETVVIPTNRPPKRIDKQDQIYKTAKERYDAVIRDIRDCYERGQPVLVGTTSIENSELLSHLLKQAGLPHEVLNAKQHAREAEIVAEAGRPKRITIATNMAGRGTDIVLGGNAEKQASFLELDETLPEDEKRRRIQKLHDEWQALHDQVKAAGGLHIIGTERHESRRIDNQLRGRAGRQGDPGSSRFYLSLEDPLLRIFAGDRVRAIMERLKMPEGEAIEAGIVSRSIESAQRKVEARNFDIRKQLLEYDDVSNDQRKVIYQQRNELLEANDITETIGAMRQSVIADIVHQFVPAGSIEEQWDVPELEEVLRNEWQLDLAIQEMINESNSISADEILEAVEAAADEAYEAKVELVGRESFSAFERSIMLQTLDRSWREHLAALDHLRQGIHLRGYAQKNPKQEYKREAFELFAAMLDAVKLEVTRVVMNVQIQSPEQLEQAAEQLEEQGSHLENVEFRHAEFAEAAAAAPVAAEAATAAMIGDAMSHGSSQAAAANMSADNVPKVGRNDPCPCGSGKKYKQCHGKIV.

ATP-binding positions include Gln-87, 105–109 (GEGKT), and Asp-515. Zn(2+)-binding residues include Cys-920, Cys-922, Cys-931, and His-932.

Belongs to the SecA family. In terms of assembly, monomer and homodimer. Part of the essential Sec protein translocation apparatus which comprises SecA, SecYEG and auxiliary proteins SecDF-YajC and YidC. Zn(2+) serves as cofactor.

It is found in the cell inner membrane. It localises to the cytoplasm. It carries out the reaction ATP + H2O + cellular proteinSide 1 = ADP + phosphate + cellular proteinSide 2.. In terms of biological role, part of the Sec protein translocase complex. Interacts with the SecYEG preprotein conducting channel. Has a central role in coupling the hydrolysis of ATP to the transfer of proteins into and across the cell membrane, serving both as a receptor for the preprotein-SecB complex and as an ATP-driven molecular motor driving the stepwise translocation of polypeptide chains across the membrane. In Paraburkholderia xenovorans (strain LB400), this protein is Protein translocase subunit SecA.